Reading from the N-terminus, the 1004-residue chain is Glutamate [NMDA] receptor subunit 1 (1004 aa).

The signal sequence occupies residues 1–39 (MAGTDSPAAARFVYRCLLFAPAIVVGLLLPLTLPPIAAA). Residues 40-585 (QRHTASDNPS…TLVSFLQPFS (546 aa)) are Extracellular-facing. Residues asparagine 270, asparagine 326, asparagine 357, asparagine 409, asparagine 466, asparagine 493, and asparagine 513 are each glycosylated (N-linked (GlcNAc...) asparagine). Glycine is bound by residues 542–544 (PLT) and arginine 549. The chain crosses the membrane as a helical span at residues 586–606 (NTLWILVMVSVHVVALVLYLL). Over 607-663 (DRFSPFGRFKLSHSDSNEEKALNLSSAVWFAWGVLLNSGIGEGTPRSFSARVLGMVW) the chain is Cytoplasmic. Residues 664–684 (AGFAMIIVASYTANLAAFLVL) form a helical membrane-spanning segment. The Extracellular segment spans residues 685–843 (ERPKTKLSGI…KTPNTLGLKN (159 aa)). Residue asparagine 705 is glycosylated (N-linked (GlcNAc...) asparagine). Glycine contacts are provided by serine 715 and aspartate 759. Residues 844 to 864 (MAGVFILVGVGIAGGVGLIII) form a helical membrane-spanning segment. Topologically, residues 865-1004 (EVIYKKHQVK…YTSDVSHLVV (140 aa)) are cytoplasmic. The tract at residues 980–1004 (TRPQQNILPPRYSPGYTSDVSHLVV) is disordered. The span at 994–1004 (GYTSDVSHLVV) shows a compositional bias: polar residues.

It belongs to the glutamate-gated ion channel (TC 1.A.10.1) family. In terms of assembly, forms a heteromeric NMDA channel with Nmdar2.

The protein localises to the cell membrane. It is found in the postsynaptic cell membrane. The protein resides in the postsynaptic density. In terms of biological role, NMDA receptor subtype of glutamate-gated ion channels with high calcium permeability and voltage-dependent sensitivity to magnesium. Mediated by glycine. This protein plays a key role in synaptic plasticity, synaptogenesis, excitotoxicity, memory acquisition and learning. It mediates neuronal functions in glutamate neurotransmission. Is involved in the cell surface targeting of NMDA receptors. Plays a role in associative learning and in long-term memory consolidation. The chain is Glutamate [NMDA] receptor subunit 1 from Drosophila persimilis (Fruit fly).